The sequence spans 245 residues: Fibroblast growth factor-binding protein 3 (245 aa).

The signal sequence occupies residues M1–G28. The disordered stretch occupies residues A33–F52. Cystine bridges form between C60–C81 and C91–C125. The segment at C136–G216 is disordered. Positions R170 to S180 are enriched in low complexity. C228 and C236 are disulfide-bonded.

It belongs to the fibroblast growth factor-binding protein family. As to quaternary structure, interacts with FGF2. In the adult, highly expressed in brain with lower levels in ovary. In the embryo, highest levels are found in the brain and spinal cord at 14 dpc and expression is almost completely restricted to the brain by 18 dpc. In the adult and postnatal brain, highly expressed in the orbitofrontal cortex where it is concentrated primarily in differentiated neurons.

The protein resides in the secreted. Its function is as follows. Heparin-binding protein which binds to FGF2, prevents binding of FGF2 to heparin and probably inhibits immobilization of FGF2 on extracellular matrix glycosaminoglycans, allowing its release and subsequent activation of FGFR signaling which leads to increased vascular permeability. This Mus musculus (Mouse) protein is Fibroblast growth factor-binding protein 3 (Fgfbp3).